Consider the following 966-residue polypeptide: Collagen alpha-1(I) chain (966 aa).

The segment at 1-966 (SYGYDEKSAG…PGPPGPPGPP (966 aa)) is disordered. The residue at position 7 (lysine 7) is an Allysine. Serine 8 is modified (phosphoserine). 11 positions are modified to 4-hydroxyproline: proline 27, proline 30, proline 32, proline 41, proline 44, proline 47, proline 61, proline 76, proline 82, proline 91, and proline 97. Positions 64 to 78 (NGDDGEAGKPGRPGE) are enriched in basic and acidic residues. Position 100 is a 5-hydroxylysine; alternate (lysine 100). Lysine 100 carries an O-linked (Gal...) hydroxylysine; alternate glycan. A Phosphoserine modification is found at serine 106. Positions 114 to 130 (DAGPAGPKGEPGSPGEN) are enriched in low complexity. 4-hydroxyproline occurs at positions 124, 127, 133, 142, 148, 169, 178, 181, 208, 211, 223, 229, 238, 244, 247, and 262. Positions 148–166 (PGASGPAGARGNDGATGAA) are enriched in low complexity. The span at 168-180 (PPGPTGPAGPPGF) shows a compositional bias: pro residues. Over residues 214–253 (AGAAGPAGNPGADGQPGAKGANGAPGIAGAPGFPGARGPS) the composition is skewed to low complexity. Residue lysine 265 is modified to 5-hydroxylysine. 4-hydroxyproline occurs at positions 271, 274, 286, 295, 310, 316, 325, and 331. The segment covering 320–329 (GERGGPGSRG) has biased composition (gly residues). Residue lysine 340 is modified to 5-hydroxylysine. Proline 349, proline 358, proline 364, proline 370, proline 379, proline 382, proline 391, proline 400, proline 406, proline 418, proline 427, proline 436, proline 439, proline 457, proline 475, proline 481, proline 487, proline 493, proline 499, proline 505, proline 517, proline 526, proline 538, proline 542, proline 548, proline 554, and proline 563 each carry 4-hydroxyproline. The segment covering 373–399 (KGLTGSPGSPGPDGKTGPPGPAGQDGR) has biased composition (low complexity). Positions 408–427 (ARGQAGVMGFPGPKGAAGEP) are enriched in low complexity. Positions 469–496 (QGPAGSPGFQGLPGPAGPPGEAGKPGEQ) are enriched in low complexity. At lysine 575 the chain carries 5-hydroxylysine. Proline 581, proline 596, and proline 602 each carry 4-hydroxyproline. The segment covering 608 to 622 (SGPSGPAGPTGARGA) has biased composition (low complexity). Residue serine 611 is modified to Phosphoserine. A 4-hydroxyproline mark is found at proline 623, proline 629, proline 632, proline 641, proline 647, proline 665, proline 674, and proline 683. The span at 635–662 (AGFAGPPGADGQPGAKGEPGDAGAKGDA) shows a compositional bias: low complexity. Residues 664 to 676 (PPGPAGPTGPPGP) are compositionally biased toward pro residues. Lysine 686 bears the 5-hydroxylysine mark. The span at 691–707 (SAGPPGATGFPGAAGRV) shows a compositional bias: low complexity. A 4-hydroxyproline mark is found at proline 695 and proline 701. A 3-hydroxyproline modification is found at proline 709. Proline 710, proline 719, proline 722, proline 746, proline 755, proline 773, proline 782, proline 785, proline 791, proline 806, proline 812, proline 818, proline 826, and proline 832 each carry 4-hydroxyproline. Residues 736 to 755 (ETGPAGEKGSPGADGPAGAP) show a composition bias toward low complexity. Positions 805-815 (PPGPVGPPGLA) are enriched in pro residues. The segment covering 824 to 835 (EGPGAEGSPGRG) has biased composition (gly residues). Over residues 852 to 866 (AGPAGARGPAGPQGP) the composition is skewed to low complexity. The segment covering 867 to 881 (RGDKGETGEQGDRGI) has biased composition (basic and acidic residues). Residue lysine 870 is modified to 5-hydroxylysine. Lysine 882 carries the 5-hydroxylysine; alternate modification. Lysine 882 carries an O-linked (Gal...) hydroxylysine; alternate glycan. A 4-hydroxyproline mark is found at proline 897, proline 900, proline 918, and proline 933. Residues 900–933 (PGEQGPSGASGPAGPRGPPGSAGSPGKDGLNGLP) show a composition bias toward low complexity. At proline 938 the chain carries 3-hydroxyproline. Position 939 is a 4-hydroxyproline (proline 939). Pro residues predominate over residues 951–966 (VGPPGPPGPPGPPGPP). A 3-hydroxyproline modification is found at proline 953. Residue proline 954 is modified to 4-hydroxyproline. Residue proline 956 is modified to 3-hydroxyproline. Proline 957 carries the 4-hydroxyproline modification. Proline 959 is subject to 3-hydroxyproline. Residues proline 960, proline 963, and proline 966 each carry the 4-hydroxyproline modification.

Belongs to the fibrillar collagen family. In terms of assembly, trimers of one alpha 2(I) and two alpha 1(I) chains. Contains mostly 4-hydroxyproline. Proline residues at the third position of the tripeptide repeating unit (G-X-Y) are hydroxylated in some or all of the chains. Post-translationally, contains 3-hydroxyproline at a few sites. This modification occurs on the first proline residue in the sequence motif Gly-Pro-Hyp, where Hyp is 4-hydroxyproline. In terms of processing, lysine residues at the third position of the tripeptide repeating unit (G-X-Y) are 5-hydroxylated in some or all of the chains. O-glycosylated on hydroxylated lysine residues. The O-linked glycan consists of a Glc-Gal disaccharide. As to expression, expressed in bones.

It is found in the secreted. The protein resides in the extracellular space. The protein localises to the extracellular matrix. In terms of biological role, type I collagen is a member of group I collagen (fibrillar forming collagen). This is Collagen alpha-1(I) chain from Bradypus variegatus (Brown-throated three-fingered sloth).